The following is an 86-amino-acid chain: MANIKQQKKRNKTNEKRRLQNVSFKSSVKTVVKQVKTAVANADKQKALALLSVAYKKFDKGVSKRVYHANFSARNKSDLQKLVNTL.

Residues 1–11 (MANIKQQKKRN) are compositionally biased toward basic residues. The tract at residues 1-21 (MANIKQQKKRNKTNEKRRLQN) is disordered.

This sequence belongs to the bacterial ribosomal protein bS20 family.

Functionally, binds directly to 16S ribosomal RNA. This Onion yellows phytoplasma (strain OY-M) protein is Small ribosomal subunit protein bS20.